A 318-amino-acid chain; its full sequence is Lipid A biosynthesis acyltransferase (318 aa).

The chain crosses the membrane as a helical span at residues 27 to 47 (PQYWGIWLGIFFLLLLAFVPF). Positions 145 to 150 (HGWAID) match the HXXXXD motif motif.

Belongs to the LpxL/LpxM/LpxP family. LpxM subfamily.

The protein resides in the cell inner membrane. The catalysed reaction is an alpha-Kdo-(2-&gt;4)-alpha-Kdo-(2-&gt;6)-(acyl)-lipid IVA + a fatty acyl-[ACP] = an alpha-Kdo-(2-&gt;4)-alpha-Kdo-(2-&gt;6)-lipid A + holo-[ACP]. The protein operates within glycolipid biosynthesis; KDO(2)-lipid A biosynthesis; KDO(2)-lipid A from CMP-3-deoxy-D-manno-octulosonate and lipid IV(A): step 4/4. Its pathway is bacterial outer membrane biogenesis; lipopolysaccharide biosynthesis. Catalyzes the transfer of an acyl chain from an acyl-[acyl-carrier-protein] (ACP) to a Kdo(2)-(acyl)-lipid IV(A) to form a Kdo(2)-lipid A. This is Lipid A biosynthesis acyltransferase from Haemophilus influenzae (strain ATCC 51907 / DSM 11121 / KW20 / Rd).